The following is a 325-amino-acid chain: MAQMTMVQAINDALKTELKNDQDVLIFGEDVGVNGGVFRVTEGLQKEFGEDRVFDTPLAESGIGGLAMGLAVEGFRPVMEVQFLGFVFEVFDAIAGQIARTRFRSGGTKTAPVTIRSPFGGGVHTPELHADNLEGILAQSPGLKVVIPSGPYDAKGLLISSIRSNDPVVYLEHMKLYRSFREEVPEEEYTIDIGKANVKKEGNDISIITYGAMVQESMKAAEELEKDGYSVEVIDLRTVQPIDVDTIVASVEKTGRAVVVQEAQRQAGVGAAVVAELSERAILSLEAPIGRVAAADTIYPFTQAENVWLPNKNDIIEKAKETLEF.

Glutamate 60 is a thiamine diphosphate binding site.

Heterodimer of an alpha and a beta chain. The cofactor is thiamine diphosphate.

It catalyses the reaction N(6)-[(R)-lipoyl]-L-lysyl-[protein] + pyruvate + H(+) = N(6)-[(R)-S(8)-acetyldihydrolipoyl]-L-lysyl-[protein] + CO2. The pyruvate dehydrogenase complex catalyzes the overall conversion of pyruvate to acetyl-CoA and CO(2). It contains multiple copies of three enzymatic components: pyruvate dehydrogenase (E1), dihydrolipoamide acetyltransferase (E2) and lipoamide dehydrogenase (E3). This Staphylococcus aureus (strain Mu50 / ATCC 700699) protein is Pyruvate dehydrogenase E1 component subunit beta (pdhB).